The chain runs to 121 residues: Phosphoribosyl-AMP cyclohydrolase (121 aa).

A Mg(2+)-binding site is contributed by Asp-74. Cys-75 is a binding site for Zn(2+). Mg(2+) contacts are provided by Asp-76 and Asp-78. Zn(2+) contacts are provided by Cys-91 and Cys-98.

The protein belongs to the PRA-CH family. Homodimer. The cofactor is Mg(2+). Requires Zn(2+) as cofactor.

Its subcellular location is the cytoplasm. It carries out the reaction 1-(5-phospho-beta-D-ribosyl)-5'-AMP + H2O = 1-(5-phospho-beta-D-ribosyl)-5-[(5-phospho-beta-D-ribosylamino)methylideneamino]imidazole-4-carboxamide. The protein operates within amino-acid biosynthesis; L-histidine biosynthesis; L-histidine from 5-phospho-alpha-D-ribose 1-diphosphate: step 3/9. Its function is as follows. Catalyzes the hydrolysis of the adenine ring of phosphoribosyl-AMP. The chain is Phosphoribosyl-AMP cyclohydrolase from Methanothrix thermoacetophila (strain DSM 6194 / JCM 14653 / NBRC 101360 / PT) (Methanosaeta thermophila).